The chain runs to 402 residues: MDKLTVQDLSPEEKKVLVRVDFNVPMQDGKILDDIRIRSAMPTINYLLKKHAAVILMSHLGRPKGQGFQEEYSLQPVVDVLEGYLGHHVPLAPDCVGEVARQAVAQLSPGRVLLLENLRFHIGEEHPEKDPTFAAELSSYGDFYVNDAFGTSHRKHASVYVVPQAFPGRAAAGLLMEKELEFLGRHLLTSPKRPFTAILGGAKISSKIGVIEALLNQVDYLLLAGGMGFTFLQALGKSLGNSLVEKSALDLARNVLKIAKSRNVTIVLPSDVKAAENLQSKEYSVISIDQGIPPHLQGFDIGPRTTEEFIRIINQSATVFWNGPVGVYEVPPFDSGSIAIANALGNHPSAVTVVGGGDAAAVVALAGCSTKVSHVSTGGGASLEFLEQGFLPGTEVLSPSKS.

Substrate-binding positions include 21 to 23 (DFN), R36, 59 to 62 (HLGR), R119, and R154. Residues K207, G298, E329, and 356 to 359 (GGDA) contribute to the ATP site.

It belongs to the phosphoglycerate kinase family. In terms of assembly, monomer.

The protein localises to the cytoplasm. It carries out the reaction (2R)-3-phosphoglycerate + ATP = (2R)-3-phospho-glyceroyl phosphate + ADP. Its pathway is carbohydrate degradation; glycolysis; pyruvate from D-glyceraldehyde 3-phosphate: step 2/5. This is Phosphoglycerate kinase (pgk) from Chlamydia pneumoniae (Chlamydophila pneumoniae).